Reading from the N-terminus, the 191-residue chain is UPF0302 protein SA1295 (191 aa).

It belongs to the UPF0302 family.

The protein is UPF0302 protein SA1295 of Staphylococcus aureus (strain N315).